The primary structure comprises 66 residues: DNA-directed RNA polymerase subunit Rpo10 (66 aa).

Residues cysteine 7, cysteine 10, cysteine 44, and cysteine 45 each coordinate Zn(2+).

This sequence belongs to the archaeal Rpo10/eukaryotic RPB10 RNA polymerase subunit family. Part of the RNA polymerase complex. Zn(2+) serves as cofactor.

It is found in the cytoplasm. The catalysed reaction is RNA(n) + a ribonucleoside 5'-triphosphate = RNA(n+1) + diphosphate. DNA-dependent RNA polymerase (RNAP) catalyzes the transcription of DNA into RNA using the four ribonucleoside triphosphates as substrates. In Pyrobaculum aerophilum (strain ATCC 51768 / DSM 7523 / JCM 9630 / CIP 104966 / NBRC 100827 / IM2), this protein is DNA-directed RNA polymerase subunit Rpo10.